Reading from the N-terminus, the 593-residue chain is Arginine--tRNA ligase (593 aa).

The 'HIGH' region motif lies at 138–148 (ANPTGPLHVGH).

Belongs to the class-I aminoacyl-tRNA synthetase family. In terms of assembly, monomer.

It localises to the cytoplasm. The catalysed reaction is tRNA(Arg) + L-arginine + ATP = L-arginyl-tRNA(Arg) + AMP + diphosphate. The chain is Arginine--tRNA ligase from Burkholderia ambifaria (strain ATCC BAA-244 / DSM 16087 / CCUG 44356 / LMG 19182 / AMMD) (Burkholderia cepacia (strain AMMD)).